Consider the following 197-residue polypeptide: RNA polymerase II subunit A C-terminal domain phosphatase ssup-72 (197 aa).

At Ser-39 the chain carries Phosphoserine.

This sequence belongs to the SSU72 phosphatase family. As to quaternary structure, may interact with synd-1 (via C-terminus); the interaction may prevent ssup-72 binding to RNA polymerase II ama-1. May interact with RNA polymerase II ama-1. In terms of processing, may be phosphorylated by kin-20. As to expression, expressed in epidermis, intestine and nervous system.

It localises to the nucleus. It catalyses the reaction O-phospho-L-seryl-[protein] + H2O = L-seryl-[protein] + phosphate. It carries out the reaction O-phospho-L-threonyl-[protein] + H2O = L-threonyl-[protein] + phosphate. In terms of biological role, protein phosphatase that dephosphorylates 'Ser-5' of the heptad repeats YSPTSPS in the C-terminal domain of the large RNA polymerase II subunit ama-1. By regulating the phosphorylation status of ama-1 and thus ama-1 binding to specific polyadenylation sites, regulates alternative polyadenylation of pre-mRNAs, including unc-44 and dlk-1 mRNAs. This results in the tissue-specific expression of unc-44 isoforms. The chain is RNA polymerase II subunit A C-terminal domain phosphatase ssup-72 from Caenorhabditis elegans.